Here is a 188-residue protein sequence, read N- to C-terminus: Large ribosomal subunit protein eL18 (188 aa).

A Glycyl lysine isopeptide (Lys-Gly) (interchain with G-Cter in SUMO2) cross-link involves residue K119. At S130 the chain carries Phosphoserine. The disordered stretch occupies residues 150 to 188 (RHFGKAPGTPHSHTKPYVRSKGRKFERARGRRASRGYKN). The residue at position 158 (T158) is a Phosphothreonine. Basic residues-rich tracts occupy residues 161-171 (SHTKPYVRSKG) and 178-188 (RGRRASRGYKN). K164 is covalently cross-linked (Glycyl lysine isopeptide (Lys-Gly) (interchain with G-Cter in SUMO2)).

This sequence belongs to the eukaryotic ribosomal protein eL18 family. Component of the large ribosomal subunit.

It localises to the cytoplasm. The protein resides in the cytosol. It is found in the rough endoplasmic reticulum. In terms of biological role, component of the large ribosomal subunit. The ribosome is a large ribonucleoprotein complex responsible for the synthesis of proteins in the cell. The protein is Large ribosomal subunit protein eL18 (Rpl18) of Rattus norvegicus (Rat).